A 476-amino-acid polypeptide reads, in one-letter code: Lactate utilization protein B 1 (476 aa).

4Fe-4S ferredoxin-type domains follow at residues 301-331 (GTEFQSVLQCIRCAACINVCPVYRHIGGHAY) and 350-379 (YDEYKDLPYASSLCGACTEACPVKIPLHDL). Residues Cys310, Cys313, Cys316, Cys320, Cys363, Cys366, and Cys370 each coordinate [4Fe-4S] cluster.

The protein belongs to the LutB/YkgF family.

Is involved in L-lactate degradation and allows cells to grow with lactate as the sole carbon source. Has probably a role as an electron transporter during oxidation of L-lactate. This chain is Lactate utilization protein B 1, found in Bacillus mycoides (strain KBAB4) (Bacillus weihenstephanensis).